The sequence spans 370 residues: MHLESIVLRNFRNYENLELEFSPSVNVFLGENAQGKTNLLEAVLMLALAKSHRTTNDKDFIMWEKEEAKMEGRVVKRGQTVPLELAITQKGKRAKVNHLEQKKLSQYVGNLNVVIFAPEDLSLVKGAPGVRRRFLNMEIGQMQPIYLHNLSEYQRILQQRNQYLKMLQMKRKVDPMLLDILTEQFADVAINLTKRRADFIQKLEAYAAPIHHQISRGLETLKIEYKASVTLNGDDPEVWKADLLQKMESIKQREIDRGVTLIGPHRDDSLFYINGQNVQDFGSQGQQRTTALSVKLAEIDLIHEETGEYPVLLLDDVLSELDDYRQSHLLGAIEGKVQTFVTTTSTSGIDHNTLRQATTFYVEKGTVKKS.

An ATP-binding site is contributed by 30–37; sequence GENAQGKT.

The protein belongs to the RecF family.

The protein resides in the cytoplasm. Its function is as follows. The RecF protein is involved in DNA metabolism; it is required for DNA replication and normal SOS inducibility. RecF binds preferentially to single-stranded, linear DNA. It also seems to bind ATP. This is DNA replication and repair protein RecF from Listeria innocua serovar 6a (strain ATCC BAA-680 / CLIP 11262).